A 153-amino-acid chain; its full sequence is ORM1-like protein 1 (153 aa).

The Cytoplasmic segment spans residues 1–26; it reads MNVGVAHSEVNPNTRVMNSRGMWLTY. The next 2 helical transmembrane spans lie at 27-46 and 47-64; these read ALGVGLLHIVLLSIPFFSVP and VAWTLTNVIHNLGMYVFL. The Cytoplasmic portion of the chain corresponds to 65-100; the sequence is HAVKGTPFETPDQGKARLLTHWEQLDYGVQFTSSRK. Residues 101-121 traverse the membrane as a helical segment; the sequence is FFTISPIILYFLASFYTKYDT. At 122-123 the chain is on the extracellular side; that stretch reads TH. The chain crosses the membrane as a helical span at residues 124–140; sequence FILNTASLLSVLIPKMP. Topologically, residues 141–153 are cytoplasmic; it reads QLHGVRIFGINKY.

Belongs to the ORM family. As to quaternary structure, ceramide-sensitive subunit of the serine palmitoyltransferase (SPT) complex, which is also composed of SPTLC1, SPTLC2/3 and SPTSSA/B.

It localises to the endoplasmic reticulum membrane. Its function is as follows. Plays an essential role in the homeostatic regulation of sphingolipid de novo biosynthesis by modulating the activity of the serine palmitoyltransferase (SPT) in response to ceramide levels. When complexed to SPT, the binding of ceramides to its N-terminus stabilizes a conformation that block SPT substrate entry, hence preventing SPT catalytic activity. Through this mechanism, maintains ceramide levels at sufficient concentrations for the production of complex sphingolipids, but which prevents the accumulation of ceramides to levels that trigger apoptosis. This Bos taurus (Bovine) protein is ORM1-like protein 1 (ORMDL1).